Consider the following 339-residue polypeptide: Protein H339R (339 aa).

Belongs to the asfivirus H339R family. In terms of assembly, interacts with host NACA (alpha chain of nascent polypeptide-associated complex).

The protein localises to the host cytoplasm. Its subcellular location is the host nucleus. This African swine fever virus (isolate Tick/Malawi/Lil 20-1/1983) (ASFV) protein is Protein H339R.